The sequence spans 485 residues: Choline/ethanolamine transporter flvcr2b (485 aa).

The Cytoplasmic portion of the chain corresponds to 1 to 46; the sequence is MDTRFNDINRVKMGDESKSVDGEVNDNTYYSKTDAEVNFEHRYTTP. Residues 47 to 71 form a helical membrane-spanning segment; the sequence is ETRLYKKRWVIVCLFSSYSLCNSYQ. Choline contacts are provided by N68 and W72. At 72–89 the chain is on the extracellular side; it reads WIQYGIINNIFMRFYGVD. Residues 90 to 117 form a helical membrane-spanning segment; it reads SFTIDWMSMIYMLTYIPLIFPVSWLLDK. Topologically, residues 118–119 are cytoplasmic; the sequence is KG. Residues 120–139 traverse the membrane as a helical segment; that stretch reads LRVIALVAAALNCAGTWIKV. Residues 140–146 lie on the Extracellular side of the membrane; the sequence is ASARPDL. The chain crosses the membrane as a helical span at residues 147-175; it reads FPVTFLGQFTCSVAQVFILGMPSRIASVW. Positions 161 and 165 each coordinate choline. At 176 to 180 the chain is on the cytoplasmic side; that stretch reads FGSDE. Residues 181 to 206 traverse the membrane as a helical segment; it reads VSTACSIGVFGNQLGIAIGFLVPPIL. Residues 207 to 211 are Extracellular-facing; the sequence is VPNVD. A helical transmembrane segment spans residues 212–241; the sequence is DLDELAAHIRVMFYITAGVATFLFVLVVIV. At 242–277 the chain is on the cytoplasmic side; it reads FQERPEIPPTLAQAAARRISPESYSYTASILRLLRN. A helical membrane pass occupies residues 278-308; that stretch reads KAFILLVITYGLNVGCFYAVSTLLNRMIIEH. Y295 lines the choline pocket. The Extracellular portion of the chain corresponds to 309 to 312; it reads YPGE. A helical membrane pass occupies residues 313–341; sequence EVNAGRIGLTIVVAGMVGSLICGIWLDRS. Over 342-343 the chain is Cytoplasmic; it reads KT. Residues 344 to 366 traverse the membrane as a helical segment; sequence YKQTTLAVYLMSLMGLVIYAFTL. Residues 367 to 369 lie on the Extracellular side of the membrane; sequence DLH. Residues 370–399 traverse the membrane as a helical segment; it reads HLWVVFITAGALGFFMTGYLPLGFEFAVEL. The Cytoplasmic portion of the chain corresponds to 400–407; it reads TYPESEGT. Residues 408–433 form a helical membrane-spanning segment; it reads SSGLLNCSAQVFGIIFTICQGKIMDS. Q417 is a binding site for choline. Residues 434-435 lie on the Extracellular side of the membrane; the sequence is FG. A helical transmembrane segment spans residues 436–458; sequence TLAGNLFLCAFLLIGTIITGCIK. The Cytoplasmic portion of the chain corresponds to 459–485; it reads SDLRRQLANQQAQTADHLDTSPTQTRF.

This sequence belongs to the major facilitator superfamily. Feline leukemia virus subgroup C receptor (TC 2.A.1.28.1) family.

Its subcellular location is the cell membrane. It is found in the mitochondrion membrane. It localises to the endoplasmic reticulum membrane. It carries out the reaction choline(out) = choline(in). The enzyme catalyses ethanolamine(in) = ethanolamine(out). The catalysed reaction is heme b(in) = heme b(out). Choline uniporter that specifically mediates choline uptake at the blood-brain-barrier. Responsible for the majority of choline uptake across the blood-brain-barrier from the circulation into the brain. Choline, a nutrient critical for brain development, is a precursor of phosphatidylcholine, as well as betaine. Also mediates transport of ethanolamine. Choline and ethanolamine transport is not coupled with proton transport and is exclusively driven by the choline gradient across the plasma membrane. Also acts as a heme b transporter. The protein is Choline/ethanolamine transporter flvcr2b of Danio rerio (Zebrafish).